Reading from the N-terminus, the 358-residue chain is Fructose-bisphosphate aldolase 6, cytosolic (358 aa).

S2 is subject to N-acetylserine. R39 is a substrate binding site. C68 is modified (S-glutathionyl cysteine; transient). Residue C173 is modified to S-glutathionyl cysteine; transient; alternate. C173 is modified (S-nitrosocysteine; transient; alternate). E183 serves as the catalytic Proton acceptor. Catalysis depends on K225, which acts as the Schiff-base intermediate with dihydroxyacetone-P. Residues 266–268 (SGG) and R298 each bind substrate. S350 is subject to Phosphoserine. K354 is subject to N6,N6,N6-trimethyllysine.

This sequence belongs to the class I fructose-bisphosphate aldolase family. Homotetramer. Interacts with TRX1 and TRX3. Interacts with GAPC1 and VDAC3. S-glutathionylated at Cys-68 and Cys-173. Post-translationally, S-nitrosylated at Cys-173. Expressed in roots, rosettes leaves, cauline leaves, stems and flowers.

It localises to the cytoplasm. Its subcellular location is the cytosol. It is found in the nucleus. The protein resides in the mitochondrion. The catalysed reaction is beta-D-fructose 1,6-bisphosphate = D-glyceraldehyde 3-phosphate + dihydroxyacetone phosphate. It functions in the pathway carbohydrate degradation; glycolysis; D-glyceraldehyde 3-phosphate and glycerone phosphate from D-glucose: step 4/4. With respect to regulation, total and irreversible inhibition by S-nitrosoglutathione (GSNO). Partial and reversible inhibition by oxidized glutathione (GSSG). Its function is as follows. Fructose-bisphosphate aldolase that plays a key role in glycolysis and gluconeogenesis. Associates with GAPC1 to the outer mitochondrial membrane, in a redox-dependent manner, leading to binding and bundling of actin. Actin binding and bundling occurs under oxidizing conditions and is reversible under reducing conditions. May be part of a redox-dependent retrograde signal transduction network for adaptation upon oxidative stress. This chain is Fructose-bisphosphate aldolase 6, cytosolic, found in Arabidopsis thaliana (Mouse-ear cress).